A 126-amino-acid polypeptide reads, in one-letter code: Large ribosomal subunit protein bL20 (126 aa).

This sequence belongs to the bacterial ribosomal protein bL20 family.

In terms of biological role, binds directly to 23S ribosomal RNA and is necessary for the in vitro assembly process of the 50S ribosomal subunit. It is not involved in the protein synthesizing functions of that subunit. The chain is Large ribosomal subunit protein bL20 from Parafrankia sp. (strain EAN1pec).